The primary structure comprises 299 residues: ATP phosphoribosyltransferase (299 aa).

It belongs to the ATP phosphoribosyltransferase family. Long subfamily. Requires Mg(2+) as cofactor.

It localises to the cytoplasm. It catalyses the reaction 1-(5-phospho-beta-D-ribosyl)-ATP + diphosphate = 5-phospho-alpha-D-ribose 1-diphosphate + ATP. It functions in the pathway amino-acid biosynthesis; L-histidine biosynthesis; L-histidine from 5-phospho-alpha-D-ribose 1-diphosphate: step 1/9. Feedback inhibited by histidine. Functionally, catalyzes the condensation of ATP and 5-phosphoribose 1-diphosphate to form N'-(5'-phosphoribosyl)-ATP (PR-ATP). Has a crucial role in the pathway because the rate of histidine biosynthesis seems to be controlled primarily by regulation of HisG enzymatic activity. This is ATP phosphoribosyltransferase from Shewanella piezotolerans (strain WP3 / JCM 13877).